Consider the following 73-residue polypeptide: Large ribosomal subunit protein bL31 (73 aa).

Zn(2+) contacts are provided by C16, C18, C37, and C40.

Belongs to the bacterial ribosomal protein bL31 family. Type A subfamily. As to quaternary structure, part of the 50S ribosomal subunit. It depends on Zn(2+) as a cofactor.

Functionally, binds the 23S rRNA. This chain is Large ribosomal subunit protein bL31, found in Pseudomonas savastanoi pv. phaseolicola (strain 1448A / Race 6) (Pseudomonas syringae pv. phaseolicola (strain 1448A / Race 6)).